The chain runs to 1240 residues: Selection and upkeep of intraepithelial T-cells protein 6 (1240 aa).

The first 24 residues, 1-24 (MGTIGVPLTAHCVVLFLLQMVALS), serve as a signal peptide directing secretion. The Extracellular segment spans residues 25–1086 (TEQFTVNGLE…CNKRNPFWKK (1062 aa)). Residues 26 to 141 (EQFTVNGLES…EEHIIEVKVT (116 aa)) form the Ig-like V-type domain. The cysteines at positions 49 and 123 are disulfide-linked. In terms of domain architecture, Ig-like C1-type spans 142–231 (ATSSDIQILM…FVTHQEESIS (90 aa)). 3 N-linked (GlcNAc...) asparagine glycosylation sites follow: Asn155, Asn200, and Asn314. A disulfide bridge links Cys163 with Cys217. A helical membrane pass occupies residues 1087–1107 (HALDLGISVFAIIVVTLIRHL). The Cytoplasmic segment spans residues 1108-1125 (NQREADQHFELDTLWSKD). The chain crosses the membrane as a helical span at residues 1126–1146 (TSVILCVLIMFNNRLKALIYF). The Extracellular segment spans residues 1147–1167 (RLYGYSPPGKTYKYIVNYILR). Residues 1168–1188 (FSQPLFFIVYSAIILVMHLQI) traverse the membrane as a helical segment. The Cytoplasmic segment spans residues 1189 to 1205 (QNTDSLFSLYNSWMVEM). Residues 1206-1226 (IMVLGLLLAIFNVKNIATALL) traverse the membrane as a helical segment. The Extracellular portion of the chain corresponds to 1227–1240 (HLGRTTLRLFRIKD).

This sequence belongs to the SKINT family. Expressed in skin.

It localises to the membrane. Functionally, may act by engaging a cell surface molecule on immature T-cells in the embryonic thymus. This Mus musculus (Mouse) protein is Selection and upkeep of intraepithelial T-cells protein 6 (Skint6).